The primary structure comprises 464 residues: Cytoplasmic tRNA 2-thiolation protein 2 (464 aa).

Belongs to the CTU2/NCS2 family.

It is found in the cytoplasm. It participates in tRNA modification; 5-methoxycarbonylmethyl-2-thiouridine-tRNA biosynthesis. Plays a central role in 2-thiolation of mcm(5)S(2)U at tRNA wobble positions of tRNA(Lys), tRNA(Glu) and tRNA(Gln). May act by forming a heterodimer with NCS6/CTU1 that ligates sulfur from thiocarboxylated URM1 onto the uridine of tRNAs at wobble position. In Oryza sativa subsp. japonica (Rice), this protein is Cytoplasmic tRNA 2-thiolation protein 2.